Here is a 74-residue protein sequence, read N- to C-terminus: Coleoptericin (74 aa).

The disordered stretch occupies residues 1–74 (SLQGGAPNFP…TWHVGGTYRR (74 aa)).

It belongs to the coleoptericin family.

The protein localises to the secreted. In terms of biological role, responsible for the anti Gram-negative activity of immune hemolymph of Z.atratus. This Zophobas atratus (Giant mealworm beetle) protein is Coleoptericin.